The primary structure comprises 353 residues: Photosystem II protein D1 (353 aa).

Thr2 is subject to N-acetylthreonine. The residue at position 2 (Thr2) is a Phosphothreonine. A run of 3 helical transmembrane segments spans residues 29 to 46 (YIGW…TATS), 118 to 133 (HFLL…EWEL), and 142 to 156 (WIAV…AATA). His118 contributes to the chlorophyll a binding site. Tyr126 is a pheophytin a binding site. [CaMn4O5] cluster is bound by residues Asp170 and Glu189. Residues 197 to 218 (FHMLGVAGVFGGSLFSAMHGSL) form a helical membrane-spanning segment. His198 contributes to the chlorophyll a binding site. A quinone is bound by residues His215 and 264–265 (SF). Residue His215 participates in Fe cation binding. Fe cation is bound at residue His272. A helical transmembrane segment spans residues 274-288 (FLAAWPVVGIWFTAL). [CaMn4O5] cluster-binding residues include His332, Glu333, Asp342, and Ala344. Positions 345–353 (SVEAPSINA) are excised as a propeptide.

This sequence belongs to the reaction center PufL/M/PsbA/D family. PSII is composed of 1 copy each of membrane proteins PsbA, PsbB, PsbC, PsbD, PsbE, PsbF, PsbH, PsbI, PsbJ, PsbK, PsbL, PsbM, PsbT, PsbX, PsbY, PsbZ, Psb30/Ycf12, at least 3 peripheral proteins of the oxygen-evolving complex and a large number of cofactors. It forms dimeric complexes. It depends on The D1/D2 heterodimer binds P680, chlorophylls that are the primary electron donor of PSII, and subsequent electron acceptors. It shares a non-heme iron and each subunit binds pheophytin, quinone, additional chlorophylls, carotenoids and lipids. D1 provides most of the ligands for the Mn4-Ca-O5 cluster of the oxygen-evolving complex (OEC). There is also a Cl(-1) ion associated with D1 and D2, which is required for oxygen evolution. The PSII complex binds additional chlorophylls, carotenoids and specific lipids. as a cofactor. Tyr-161 forms a radical intermediate that is referred to as redox-active TyrZ, YZ or Y-Z. In terms of processing, C-terminally processed by CTPA; processing is essential to allow assembly of the oxygen-evolving complex and thus photosynthetic growth.

The protein resides in the plastid. The protein localises to the chloroplast thylakoid membrane. It catalyses the reaction 2 a plastoquinone + 4 hnu + 2 H2O = 2 a plastoquinol + O2. Its function is as follows. Photosystem II (PSII) is a light-driven water:plastoquinone oxidoreductase that uses light energy to abstract electrons from H(2)O, generating O(2) and a proton gradient subsequently used for ATP formation. It consists of a core antenna complex that captures photons, and an electron transfer chain that converts photonic excitation into a charge separation. The D1/D2 (PsbA/PsbD) reaction center heterodimer binds P680, the primary electron donor of PSII as well as several subsequent electron acceptors. The chain is Photosystem II protein D1 from Chara vulgaris (Common stonewort).